A 101-amino-acid polypeptide reads, in one-letter code: UPF0473 protein LAF_0524 (101 aa).

The protein belongs to the UPF0473 family.

The polypeptide is UPF0473 protein LAF_0524 (Limosilactobacillus fermentum (strain NBRC 3956 / LMG 18251) (Lactobacillus fermentum)).